The following is a 171-amino-acid chain: Ly6/PLAUR domain-containing protein 6 (171 aa).

Residues 1 to 25 (MEPSPALAWLLLLSLVADCLKAAQS) form the signal peptide. A UPAR/Ly6 domain is found at 47–141 (FKCFTCEKAA…PRNDTDATFA (95 aa)). 6 cysteine pairs are disulfide-bonded: Cys49/Cys77, Cys52/Cys61, Cys70/Cys96, Cys102/Cys121, Cys107/Cys118, and Cys122/Cys127. The NxI motif signature appears at 88–90 (NSI). N-linked (GlcNAc...) asparagine glycans are attached at residues Asn134 and Asn147. The GPI-anchor amidated asparagine moiety is linked to residue Asn147. Residues 148 to 171 (QTNGHPHCVSVIVSCLWVWLGLTL) constitute a propeptide, removed in mature form.

In terms of assembly, interacts with nicotinic acetylcholine receptors (nAChRs) including CHRNA3, CHRNA4, CHRNA5, CHRNA6, CHRNA7, CHRNB2 and CHRNB4. Interacts (via NxI motif) with LRP6. In terms of tissue distribution, expressed at high levels in the cortex and cerebellum of the brain, at moderate levels in the lung, kidney, and liver, and at low levels in the heart and prostate (at protein level). Expressed in neurons (at protein level).

It is found in the secreted. Its subcellular location is the cytoplasm. It localises to the cell membrane. The protein localises to the synapse. The protein resides in the synaptosome. It is found in the membrane raft. Its subcellular location is the cell projection. It localises to the dendrite. The protein localises to the perikaryon. In terms of biological role, acts as a modulator of nicotinic acetylcholine receptors (nAChRs) function in the brain. Inhibits nicotine-induced Ca(2+) influx through nAChRs. In vitro, specifically inhibits alpha-3:beta-4 and alpha-7 nAChR currents in an allosteric manner. Acts as a positive regulator of Wnt/beta-catenin signaling. The chain is Ly6/PLAUR domain-containing protein 6 (Lypd6) from Rattus norvegicus (Rat).